The chain runs to 318 residues: Transaldolase (318 aa).

K132 (schiff-base intermediate with substrate) is an active-site residue.

This sequence belongs to the transaldolase family. Type 1 subfamily. In terms of assembly, homodimer.

The protein resides in the cytoplasm. The enzyme catalyses D-sedoheptulose 7-phosphate + D-glyceraldehyde 3-phosphate = D-erythrose 4-phosphate + beta-D-fructose 6-phosphate. It participates in carbohydrate degradation; pentose phosphate pathway; D-glyceraldehyde 3-phosphate and beta-D-fructose 6-phosphate from D-ribose 5-phosphate and D-xylulose 5-phosphate (non-oxidative stage): step 2/3. Functionally, transaldolase is important for the balance of metabolites in the pentose-phosphate pathway. The protein is Transaldolase of Shewanella baltica (strain OS195).